Reading from the N-terminus, the 1705-residue chain is Rho guanine nucleotide exchange factor 28 (1705 aa).

2 disordered regions span residues 287–316 and 473–524; these read RPEERTAMPSSGAETEEEIKNSVSSRSAAE and KKRS…ETNT. Phosphoserine occurs at positions 313 and 478. The segment covering 501-510 has biased composition (polar residues); sequence PGSQSSSRTG. S624 carries the phosphoserine modification. Positions 630-649 are disordered; it reads MTSPRNKSKTKSKDAKDKEK. The span at 640–649 shows a compositional bias: basic and acidic residues; that stretch reads KSKDAKDKEK. The Phorbol-ester/DAG-type zinc-finger motif lies at 652–699; it reads RHQFAPGTFSGVLQCLVCDKTLLGKESLQCSNCNANVHKGCKDAAPAC. Polar residues-rich tracts occupy residues 710–721 and 759–775; these read NKPQTILGNSSF and VPGTTLESFRRSATSLE. The segment at 710–800 is disordered; sequence NKPQTILGNS…ELLQSMGSSP (91 aa). The span at 777-791 shows a compositional bias: basic and acidic residues; it reads ESDHNSCRSRSHSDE. Residues 849–1044 enclose the DH domain; sequence KRQDVIFELM…KDMIATVDLK (196 aa). The 103-residue stretch at 1086 to 1188 folds into the PH domain; sequence TLLYDGLVYW…WMRRIQQAVE (103 aa). The segment at 1187–1207 is disordered; the sequence is VESCPEEKGGRTSESDEDKRK. The segment covering 1191-1207 has biased composition (basic and acidic residues); it reads PEEKGGRTSESDEDKRK. The tract at residues 1295–1304 is interaction with PTK2/FAK1; required for regulation of axonal branching and synapse formation; it reads AVSQSCEDSC. Residues 1312-1339 are disordered; the sequence is TLSSHDVPGSPTASLVTGGREGRGCSDV. Positions 1372–1383 are mediates cytoplasmic retention and interaction with YWHAH; it reads IIQAIQNLTRLL. Residues 1425 to 1705 are interaction with microtubules; sequence QKSRDADRQH…DGAKENIVYL (281 aa). Residues 1488 to 1525 are a coiled coil; the sequence is RSRGELDLQLQEYQHSLERLREGQRLVEREQARMRAQQ. The segment at 1496–1527 is RNA-binding; sequence QLQEYQHSLERLREGQRLVEREQARMRAQQSL. S1538 is subject to Phosphoserine. The mediates cytoplasmic retention and interaction with MAPK8IP1 stretch occupies residues 1566–1579; sequence FINEALVQMSFNTF. Residues 1638 to 1705 form a disordered region; that stretch reads PFHESSKDSC…DGAKENIVYL (68 aa). Basic and acidic residues predominate over residues 1641 to 1655; the sequence is ESSKDSCKNDLDTSH. A compositionally biased stretch (polar residues) spans 1656–1669; that stretch reads TESPTPHDSNSHRP. The span at 1688-1699 shows a compositional bias: basic and acidic residues; sequence TRQDGETGDGAK.

As to quaternary structure, homooligomer; forms cytoplasmic aggregates. Forms a complex with MAPK8 and MAPK8IP1. Interacts with RHOA. Interacts with microtubules. Interacts with YWHAE and YWHAH. Interacts with PTK2/FAK1. Interacts with NEFL. Interacts with CTNND2; prevents interaction with RHOA. Phosphorylated on tyrosine upon stimulation of cells by laminin.

It is found in the cytoplasm. The protein resides in the cell membrane. Functionally, functions as a RHOA-specific guanine nucleotide exchange factor regulating signaling pathways downstream of integrins and growth factor receptors. Functions in axonal branching, synapse formation and dendritic morphogenesis. Also functions in focal adhesion formation, cell motility and B-lymphocytes activation. May regulate NEFL expression and aggregation and play a role in apoptosis. This is Rho guanine nucleotide exchange factor 28 (ARHGEF28) from Homo sapiens (Human).